A 288-amino-acid polypeptide reads, in one-letter code: HTH-type transcriptional regulator CzcR (288 aa).

The region spanning 1 to 58 is the HTH lysR-type domain; it reads MELRDLQIFQSVADQGSVSSAAKELNYVQSNVTARIKQLENELKTPLFYRHKRGMTLT. The segment at residues 18-37 is a DNA-binding region (H-T-H motif); sequence VSSAAKELNYVQSNVTARIK.

It belongs to the LysR transcriptional regulatory family.

This Bacillus cereus (strain ATCC 10987 / NRS 248) protein is HTH-type transcriptional regulator CzcR (czcR).